We begin with the raw amino-acid sequence, 116 residues long: Large ribosomal subunit protein bL20 (116 aa).

It belongs to the bacterial ribosomal protein bL20 family.

In terms of biological role, binds directly to 23S ribosomal RNA and is necessary for the in vitro assembly process of the 50S ribosomal subunit. It is not involved in the protein synthesizing functions of that subunit. In Thermosynechococcus vestitus (strain NIES-2133 / IAM M-273 / BP-1), this protein is Large ribosomal subunit protein bL20.